A 422-amino-acid chain; its full sequence is Pristinamycin IIA synthase subunit A (422 aa).

FMN-binding residues include Asp-59, Thr-101, His-151, Tyr-155, Ser-206, and Ser-207.

This sequence belongs to the NtaA/SnaA/DszA monooxygenase family. As to quaternary structure, heterodimer of two subunits, SnaA and SnaB. The cofactor is FMN.

Catalyzes the oxidation of the proline residue of pristinamycin IIB (PIIB) to pristinamycin IIA (PIIA). The polypeptide is Pristinamycin IIA synthase subunit A (snaA) (Streptomyces pristinaespiralis).